We begin with the raw amino-acid sequence, 85 residues long: uncharacterized protein (85 aa).

Residues 17–53 adopt a coiled-coil conformation; that stretch reads KKRYEMLVQELLKEDDEEREKILAEELELLLDFLKKA.

This is an uncharacterized protein from Archaeoglobus fulgidus (strain ATCC 49558 / DSM 4304 / JCM 9628 / NBRC 100126 / VC-16).